Consider the following 353-residue polypeptide: Photosystem II D2 protein (353 aa).

Thr-2 is subject to N-acetylthreonine. Thr-2 bears the Phosphothreonine mark. Residues 41–61 (CAYFALGGWFTGTTFVTSWYT) form a helical membrane-spanning segment. His-118 contributes to the chlorophyll a binding site. The chain crosses the membrane as a helical span at residues 125 to 141 (GFMLRQFELARSVQLRP). The pheophytin a site is built by Gln-130 and Asn-143. A helical transmembrane segment spans residues 153-166 (VFVSVFLIYPLGQS). His-198 is a chlorophyll a binding site. Residues 208-228 (AALLCAIHGATVENTLFEDGD) traverse the membrane as a helical segment. His-215 and Phe-262 together coordinate a plastoquinone. A Fe cation-binding site is contributed by His-215. His-269 contacts Fe cation. The chain crosses the membrane as a helical span at residues 279–295 (GLWMSALGVVGLALNLR).

This sequence belongs to the reaction center PufL/M/PsbA/D family. In terms of assembly, PSII is composed of 1 copy each of membrane proteins PsbA, PsbB, PsbC, PsbD, PsbE, PsbF, PsbH, PsbI, PsbJ, PsbK, PsbL, PsbM, PsbT, PsbX, PsbY, PsbZ, Psb30/Ycf12, at least 3 peripheral proteins of the oxygen-evolving complex and a large number of cofactors. It forms dimeric complexes. The D1/D2 heterodimer binds P680, chlorophylls that are the primary electron donor of PSII, and subsequent electron acceptors. It shares a non-heme iron and each subunit binds pheophytin, quinone, additional chlorophylls, carotenoids and lipids. There is also a Cl(-1) ion associated with D1 and D2, which is required for oxygen evolution. The PSII complex binds additional chlorophylls, carotenoids and specific lipids. serves as cofactor.

It is found in the plastid. The protein resides in the chloroplast thylakoid membrane. It carries out the reaction 2 a plastoquinone + 4 hnu + 2 H2O = 2 a plastoquinol + O2. In terms of biological role, photosystem II (PSII) is a light-driven water:plastoquinone oxidoreductase that uses light energy to abstract electrons from H(2)O, generating O(2) and a proton gradient subsequently used for ATP formation. It consists of a core antenna complex that captures photons, and an electron transfer chain that converts photonic excitation into a charge separation. The D1/D2 (PsbA/PsbD) reaction center heterodimer binds P680, the primary electron donor of PSII as well as several subsequent electron acceptors. D2 is needed for assembly of a stable PSII complex. This is Photosystem II D2 protein from Lemna minor (Common duckweed).